Here is a 700-residue protein sequence, read N- to C-terminus: Elongation factor G 2 (700 aa).

Residues 8–290 (ERYRNIGISA…AVVDYLPSPI (283 aa)) form the tr-type G domain. Residues 17–24 (AHIDAGKT), 88–92 (DTPGH), and 142–145 (NKMD) contribute to the GTP site.

Belongs to the TRAFAC class translation factor GTPase superfamily. Classic translation factor GTPase family. EF-G/EF-2 subfamily.

It localises to the cytoplasm. Functionally, catalyzes the GTP-dependent ribosomal translocation step during translation elongation. During this step, the ribosome changes from the pre-translocational (PRE) to the post-translocational (POST) state as the newly formed A-site-bound peptidyl-tRNA and P-site-bound deacylated tRNA move to the P and E sites, respectively. Catalyzes the coordinated movement of the two tRNA molecules, the mRNA and conformational changes in the ribosome. This chain is Elongation factor G 2 (fusB), found in Ralstonia nicotianae (strain ATCC BAA-1114 / GMI1000) (Ralstonia solanacearum).